We begin with the raw amino-acid sequence, 262 residues long: Thiazole synthase (262 aa).

Lys96 functions as the Schiff-base intermediate with DXP in the catalytic mechanism. 1-deoxy-D-xylulose 5-phosphate is bound by residues Gly157, 184-185, and 206-207; these read AG and NT.

The protein belongs to the ThiG family. Homotetramer. Forms heterodimers with either ThiH or ThiS.

The protein resides in the cytoplasm. It catalyses the reaction [ThiS sulfur-carrier protein]-C-terminal-Gly-aminoethanethioate + 2-iminoacetate + 1-deoxy-D-xylulose 5-phosphate = [ThiS sulfur-carrier protein]-C-terminal Gly-Gly + 2-[(2R,5Z)-2-carboxy-4-methylthiazol-5(2H)-ylidene]ethyl phosphate + 2 H2O + H(+). It functions in the pathway cofactor biosynthesis; thiamine diphosphate biosynthesis. Catalyzes the rearrangement of 1-deoxy-D-xylulose 5-phosphate (DXP) to produce the thiazole phosphate moiety of thiamine. Sulfur is provided by the thiocarboxylate moiety of the carrier protein ThiS. In vitro, sulfur can be provided by H(2)S. In Legionella pneumophila (strain Paris), this protein is Thiazole synthase.